The sequence spans 486 residues: CUGBP Elav-like family member 4 (486 aa).

The sufficient for RNA-binding and MSE-dependent splicing activity stretch occupies residues 1–298 (MYIKMATLAN…AAFAAAQMQQ (298 aa)). Polar residues predominate over residues 18–28 (LSTNGLGSSPG). 2 disordered regions span residues 18-39 (LSTN…LSHS) and 121-149 (LPGM…QPPS). Residues 54-135 (IKLFIGQIPR…RPIQVKPADS (82 aa)) form the RRM 1 domain. Polar residues predominate over residues 138 to 149 (RGGSSCLRQPPS). Residues 152 to 232 (RKLFVGMLNK…SSLVVKFADT (81 aa)) form the RRM 2 domain. Residues 239-258 (RRMQQMAGQMGMFNPMAIPF) are necessary for TNNT2 exon 5 inclusion. Residues 404-479 (PQPPPMIPQQ…KRLKVQLKRP (76 aa)) enclose the RRM 3 domain.

Belongs to the CELF/BRUNOL family. As to expression, ubiquitous. Strongly expressed in the cerebellum, hippocampus, amygdala, temporal and frontal cortex and frontal lobes.

Its subcellular location is the nucleus. The protein resides in the cytoplasm. Its function is as follows. RNA-binding protein implicated in the regulation of pre-mRNA alternative splicing. Mediates exon inclusion and/or exclusion in pre-mRNA that are subject to tissue-specific and developmentally regulated alternative splicing. Specifically activates exon 5 inclusion of cardiac isoforms of TNNT2 during heart remodeling at the juvenile to adult transition. Promotes exclusion of both the smooth muscle (SM) and non-muscle (NM) exons in actinin pre-mRNAs. Activates the splicing of MAPT/Tau exon 10. Binds to muscle-specific splicing enhancer (MSE) intronic sites flanking the alternative exon 5 of TNNT2 pre-mRNA. This Homo sapiens (Human) protein is CUGBP Elav-like family member 4 (CELF4).